Here is a 269-residue protein sequence, read N- to C-terminus: Glutamate racemase (269 aa).

Substrate is bound by residues 7 to 8 and 39 to 40; these read DS and YG. The active-site Proton donor/acceptor is the Cys-70. A substrate-binding site is contributed by 71–72; the sequence is NT. The Proton donor/acceptor role is filled by Cys-194. 195-196 is a binding site for substrate; the sequence is TH.

This sequence belongs to the aspartate/glutamate racemases family.

It catalyses the reaction L-glutamate = D-glutamate. The protein operates within cell wall biogenesis; peptidoglycan biosynthesis. Provides the (R)-glutamate required for cell wall biosynthesis. This Ruegeria pomeroyi (strain ATCC 700808 / DSM 15171 / DSS-3) (Silicibacter pomeroyi) protein is Glutamate racemase.